Reading from the N-terminus, the 101-residue chain is Large ribosomal subunit protein bL21 (101 aa).

Belongs to the bacterial ribosomal protein bL21 family. As to quaternary structure, part of the 50S ribosomal subunit. Contacts protein L20.

Functionally, this protein binds to 23S rRNA in the presence of protein L20. The protein is Large ribosomal subunit protein bL21 of Beutenbergia cavernae (strain ATCC BAA-8 / DSM 12333 / CCUG 43141 / JCM 11478 / NBRC 16432 / NCIMB 13614 / HKI 0122).